The sequence spans 106 residues: Small ribosomal subunit protein uS17 (106 aa).

Belongs to the universal ribosomal protein uS17 family. Part of the 30S ribosomal subunit.

One of the primary rRNA binding proteins, it binds specifically to the 5'-end of 16S ribosomal RNA. The protein is Small ribosomal subunit protein uS17 of Methanosphaera stadtmanae (strain ATCC 43021 / DSM 3091 / JCM 11832 / MCB-3).